We begin with the raw amino-acid sequence, 322 residues long: Daunorubicin resistance ATP-binding protein DrrA2 (322 aa).

Residues 6 to 236 (VRAEAMEKRY…VGGDRIEVVV (231 aa)) form the ABC transporter domain. Residue 38-45 (GPNGAGKT) coordinates ATP.

Belongs to the ABC transporter superfamily. Drug exporter-1 (DrugE1) (TC 3.A.1.105) family. The complex is probably composed of two ATP-binding proteins (DrrA2) and two transmembrane proteins (DrrB2).

The protein localises to the cell membrane. The enzyme catalyses daunorubicin(in) + ATP + H2O = daunorubicin(out) + ADP + phosphate + H(+). Functionally, part of the ABC transporter complex DrrA2B2 involved in daunorubicin efflux. Responsible for energy coupling to the transport system. Confers self-resistance to daunorubicin, an antibiotic produced by S.coeruleorubidus. The sequence is that of Daunorubicin resistance ATP-binding protein DrrA2 from Streptomyces coeruleorubidus.